The following is a 993-amino-acid chain: DNA double-strand break repair Rad50 ATPase (993 aa).

ATP contacts are provided by residues Arg12, 32 to 38, and Gln133; that span reads NGSGKSS. Coiled coils occupy residues 192-222 and 402-493; these read LENL…LEKL and EELK…LEKT. Residues 452–556 form the Zinc-hook domain; the sequence is ENELKEKYED…KLNEIDSFKL (105 aa). Zn(2+) contacts are provided by Cys497 and Cys500. Coiled-coil stretches lie at residues 570 to 612, 646 to 677, and 702 to 731; these read KVEE…LEND, DSSK…EINL, and ETEK…VLKN.

It belongs to the SMC family. RAD50 subfamily. As to quaternary structure, homodimer. Forms a heterotetramer composed of two Mre11 subunits and two Rad50 subunits. It depends on Zn(2+) as a cofactor.

Part of the Rad50/Mre11 complex, which is involved in the early steps of DNA double-strand break (DSB) repair. The complex may facilitate opening of the processed DNA ends to aid in the recruitment of HerA and NurA. Rad50 controls the balance between DNA end bridging and DNA resection via ATP-dependent structural rearrangements of the Rad50/Mre11 complex. The sequence is that of DNA double-strand break repair Rad50 ATPase from Methanococcus maripaludis (strain DSM 14266 / JCM 13030 / NBRC 101832 / S2 / LL).